The chain runs to 339 residues: MEITLFDPIDAHLHVRENALLKAVLEYSSEPFSAAVIMPNLSKPLIDTPITLEYEEEILKNSSNFKPLMSLYFNDGLTLEELQRAKNKGIKFLKLYPKGMTTNAQNGTSDLLGEKTLEVLENAQKLGFILCVHAEQAGFCLDKEFLCHSVLETFALSFPKLKIIIEHLSDWRSIALIEKHDNLYATLTLHHISMTLDDLLGGSLDPHCFCKPLIKTKKDQERLLSLALKAHPKISFGSDSAPHFISKKHSANIPAGIFSAPILLPALCELFEKHNALENLQAFISDNAKKIYALDNLPSKKAHLSKKPFIVPTHTLCLNEKIAILRGGETLSWNLQEIA.

H12 and H14 together coordinate Zn(2+). Residues H14 to R16 and N40 contribute to the substrate site. Residues K94, H133, H167, and D239 each contribute to the Zn(2+) site. N6-carboxylysine is present on K94. A substrate-binding site is contributed by H133. D239 is a catalytic residue. Substrate-binding residues include H243 and A255.

This sequence belongs to the metallo-dependent hydrolases superfamily. DHOase family. Class II DHOase subfamily. As to quaternary structure, homodimer. It depends on Zn(2+) as a cofactor.

The enzyme catalyses (S)-dihydroorotate + H2O = N-carbamoyl-L-aspartate + H(+). Its pathway is pyrimidine metabolism; UMP biosynthesis via de novo pathway; (S)-dihydroorotate from bicarbonate: step 3/3. Catalyzes the reversible cyclization of carbamoyl aspartate to dihydroorotate. This is Dihydroorotase from Helicobacter pylori (strain J99 / ATCC 700824) (Campylobacter pylori J99).